The chain runs to 758 residues: Dolichyl-phosphooligosaccharide-protein glycotransferase 2 (758 aa).

The Cytoplasmic portion of the chain corresponds to 1–6 (MKRRYS). Residues 7 to 27 (ILIILLVAIFYRMITFRFKYL) form a helical membrane-spanning segment. At 28–92 (LGYDPYFHLA…KVFGVSLTTT (65 aa)) the chain is on the extracellular side. Residues 29 to 31 (GYD) carry the DXD motif 1 motif. Residue aspartate 31 coordinates Mn(2+). Residues 93 to 113 (FKITPVIFGVLTVIFLYLSLL) form a helical membrane-spanning segment. Residues 114–120 (KLYDEKR) are Cytoplasmic-facing. The helical transmembrane segment at 121–141 (AFFGGFFLAISYGHVFRSMAN) threads the bilayer. Over 142 to 145 (YYRG) the chain is Extracellular. Arginine 144 and aspartate 146 together coordinate Mn(2+). The DXD motif 2 motif lies at 144-146 (RGD). The chain crosses the membrane as a helical span at residues 146 to 166 (DNYMLFWYSVALLGISLALGI). Over 167–175 (KKGKWKYKR) the chain is Cytoplasmic. Transmembrane regions (helical) follow at residues 176–196 (LIFY…WQAY) and 197–217 (YPIF…AFIL). Topologically, residues 218–226 (KKDKYLLDS) are cytoplasmic. The helical transmembrane segment at 227–247 (IILILSTAFGVLLANYLGGIF) threads the bilayer. The Extracellular portion of the chain corresponds to 248–281 (GYGMLGYAKWLGKSVAKKLGLEFGYLKDVYLILH). The chain crosses the membrane as a helical span at residues 282–302 (LKYLVPISLSFVLVLILLGFL). Topologically, residues 303 to 310 (TKDIRIRS) are cytoplasmic. A helical transmembrane segment spans residues 311–331 (LFLGIASFIGIIILFKRFEAL). Residues 332–352 (KELSTGFGIFKEAPILETQPT) lie on the Extracellular side of the membrane. Positions 340-343 (IFKE) match the TIXE motif motif. A helical transmembrane segment spans residues 353–373 (SFKDLWAAFSLSFFLTPLFFI). Over 374 to 379 (RFKKPR) the chain is Cytoplasmic. The chain crosses the membrane as a helical span at residues 380–400 (VEDFLTLGLIIPSVYMLKTWT). Residue arginine 401 is a topological domain, extracellular. Arginine 401 lines the a glycophospholipid pocket. A helical membrane pass occupies residues 402-422 (FLFIGSMAIAIMSGIGIVELY). The Cytoplasmic segment spans residues 423–433 (EAIKPRLNGKK). A helical transmembrane segment spans residues 434-454 (ALATGIITLVILPGVIAGLSF). The Extracellular portion of the chain corresponds to 455–758 (KEVCSLHPEM…DRGVFRLSYN (304 aa)). Positions 488–490 (WWD) are interacts with target acceptor peptide in protein substrate. A WWDYG motif motif is present at residues 488–492 (WWDWG). The short motif at 540–547 (DFLKFGAI) is the DK motif element.

This sequence belongs to the STT3 family. The cofactor is Mn(2+). Requires Mg(2+) as cofactor.

The protein resides in the cell membrane. The enzyme catalyses an archaeal dolichyl phosphooligosaccharide + [protein]-L-asparagine = an archaeal dolichyl phosphate + a glycoprotein with the oligosaccharide chain attached by N-beta-D-glycosyl linkage to a protein L-asparagine.. The protein operates within protein modification; protein glycosylation. Functionally, oligosaccharyl transferase (OST) that catalyzes the initial transfer of a defined glycan (ManNAcXyl(2)GlcAMan(2)GalNAc in Pyrococcus) from the lipid carrier dolichol-monophosphate to an asparagine residue within an Asn-X-Ser/Thr consensus motif in nascent polypeptide chains, the first step in protein N-glycosylation. In Pyrococcus horikoshii (strain ATCC 700860 / DSM 12428 / JCM 9974 / NBRC 100139 / OT-3), this protein is Dolichyl-phosphooligosaccharide-protein glycotransferase 2 (aglB2).